A 243-amino-acid chain; its full sequence is tRNA (guanine-N(1)-)-methyltransferase (243 aa).

S-adenosyl-L-methionine contacts are provided by residues G108 and 127–132; that span reads LGDYVL.

Belongs to the RNA methyltransferase TrmD family. In terms of assembly, homodimer.

It localises to the cytoplasm. The catalysed reaction is guanosine(37) in tRNA + S-adenosyl-L-methionine = N(1)-methylguanosine(37) in tRNA + S-adenosyl-L-homocysteine + H(+). Functionally, specifically methylates guanosine-37 in various tRNAs. This Streptococcus gordonii (strain Challis / ATCC 35105 / BCRC 15272 / CH1 / DL1 / V288) protein is tRNA (guanine-N(1)-)-methyltransferase.